Here is a 264-residue protein sequence, read N- to C-terminus: Thymidylate synthase (264 aa).

Residue Arg21 participates in dUMP binding. His51 contacts (6R)-5,10-methylene-5,6,7,8-tetrahydrofolate. Position 126–127 (126–127) interacts with dUMP; sequence RR. Catalysis depends on Cys146, which acts as the Nucleophile. DUMP contacts are provided by residues 166–169, Asn177, and 207–209; these read RSAD and HLY. Asp169 contributes to the (6R)-5,10-methylene-5,6,7,8-tetrahydrofolate binding site. Residue Ala263 participates in (6R)-5,10-methylene-5,6,7,8-tetrahydrofolate binding.

The protein belongs to the thymidylate synthase family. Bacterial-type ThyA subfamily. As to quaternary structure, homodimer.

Its subcellular location is the cytoplasm. It catalyses the reaction dUMP + (6R)-5,10-methylene-5,6,7,8-tetrahydrofolate = 7,8-dihydrofolate + dTMP. The protein operates within pyrimidine metabolism; dTTP biosynthesis. Catalyzes the reductive methylation of 2'-deoxyuridine-5'-monophosphate (dUMP) to 2'-deoxythymidine-5'-monophosphate (dTMP) while utilizing 5,10-methylenetetrahydrofolate (mTHF) as the methyl donor and reductant in the reaction, yielding dihydrofolate (DHF) as a by-product. This enzymatic reaction provides an intracellular de novo source of dTMP, an essential precursor for DNA biosynthesis. This Polynucleobacter asymbioticus (strain DSM 18221 / CIP 109841 / QLW-P1DMWA-1) (Polynucleobacter necessarius subsp. asymbioticus) protein is Thymidylate synthase.